The chain runs to 484 residues: ATP synthase subunit beta (484 aa).

152-159 contacts ATP; it reads GGAGVGKT.

The protein belongs to the ATPase alpha/beta chains family. F-type ATPases have 2 components, CF(1) - the catalytic core - and CF(0) - the membrane proton channel. CF(1) has five subunits: alpha(3), beta(3), gamma(1), delta(1), epsilon(1). CF(0) has three main subunits: a(1), b(2) and c(9-12). The alpha and beta chains form an alternating ring which encloses part of the gamma chain. CF(1) is attached to CF(0) by a central stalk formed by the gamma and epsilon chains, while a peripheral stalk is formed by the delta and b chains.

It localises to the cell inner membrane. The enzyme catalyses ATP + H2O + 4 H(+)(in) = ADP + phosphate + 5 H(+)(out). Its function is as follows. Produces ATP from ADP in the presence of a proton gradient across the membrane. The catalytic sites are hosted primarily by the beta subunits. The sequence is that of ATP synthase subunit beta from Campylobacter lari (strain RM2100 / D67 / ATCC BAA-1060).